A 270-amino-acid chain; its full sequence is tRNA pseudouridine synthase A (270 aa).

The Nucleophile role is filled by D51. Y109 contacts substrate.

Belongs to the tRNA pseudouridine synthase TruA family. In terms of assembly, homodimer.

The catalysed reaction is uridine(38/39/40) in tRNA = pseudouridine(38/39/40) in tRNA. Formation of pseudouridine at positions 38, 39 and 40 in the anticodon stem and loop of transfer RNAs. This Variovorax paradoxus (strain S110) protein is tRNA pseudouridine synthase A.